The following is a 504-amino-acid chain: ATP-dependent RNA helicase DBP3 (504 aa).

Positions 1–14 (MSKDELKDKKRKVE) are enriched in basic and acidic residues. Positions 1–65 (MSKDELKDKK…KSETESFAAS (65 aa)) are disordered. Residues 20 to 53 (SKKKLKKDKKDKKDKKDKKDKKDKKEKKEKKEKK) show a composition bias toward basic residues. The short motif at 94–120 (LDFSQVSFIDQIQKEISKFPKPTPIQA) is the Q motif element. In terms of domain architecture, Helicase ATP-binding spans 123–296 (WPYLLAGKDV…SSFMSEPVKV (174 aa)). An ATP-binding site is contributed by 136–143 (AETGSGKT). A DEAD box motif is present at residues 243–246 (DEAD). The region spanning 325 to 474 (KLLELLKKYH…PVPEELKKFG (150 aa)) is the Helicase C-terminal domain.

The protein belongs to the DEAD box helicase family. DDX5/DBP2 subfamily.

Its subcellular location is the nucleus. The protein resides in the nucleolus. The catalysed reaction is ATP + H2O = ADP + phosphate + H(+). Functionally, ATP-dependent RNA helicase required for 60S ribosomal subunit synthesis. Involved in efficient pre-rRNA processing, predominantly at site A3, which is necessary for the normal formation of 25S and 5.8S rRNAs. The chain is ATP-dependent RNA helicase DBP3 (DBP3) from Kluyveromyces lactis (strain ATCC 8585 / CBS 2359 / DSM 70799 / NBRC 1267 / NRRL Y-1140 / WM37) (Yeast).